Consider the following 828-residue polypeptide: MSATAEVLVISSSPERNPVHTPAPPAYDPERLFGLSPVDVETTPLPSPSDLFCPPTHSRFFEVGNQVDELRRDETRKKSSTLTNDDSAVTTLEGEPATDKPKRRGRPKKEQKRATEELGPCVTGNEKTTTKKTITGTSKKRAQPATKRSKQANKTISGRVAKAGTPQVKEAGEKAICPSTPTTALPLKATNDVLEWERDGLQLEQAMTRRLDWTPTVNKVKEVVELEGKSGSDDNTRGFGNLLSEYGFNGAAAPVNDFMASVEGGPTKRRRIELVDPGVYPAPRQSVADDSEKDNTEGTRKSTPAARKKPTKRANKFTTLTARVTAKYINESTEGSDVVDEETPKAKPKVSRSKKKGQASKSYEPEFVVLSPEEAAKSLDDQELVFGTCSQLEREDSPTTIRELQAAISESERSMTLEASGRPHRTQSKGSSSTVSRFNGSGNLWSVASRDVDGSLMQVEVVDLVNSPDRSGTITLDERPSNAKRVAEAECNTSDINPTQKGSDQAKAASTSETQPVVPSTTQSKNKKAENTTSIARKPDPKMPQYDNFTDAQLSKQAASFGFKPLKNRKKMIELLEKCWKAKNSISSEANNENTDQETPAEPESAPEPGNKPKGKGTTRKTTTKAKAKTQPSTSSKSTTEAISTTKSPSNPNSNTTTSTSTSISKPTPSYANVEEIEDSEEDSDPISFPSPSRLLPQTLQTNHKHAHTLPTSNLPSSPNRTTSTSVPKEPEPPAILLPLTEQITKAVRAQSAAHPASSNSNKTHTRKQTWHEKILMYDPIPLEEFTTWLNTEGLGLVNEDREVGAGFVRRWCESKGVVCCYRPRKKE.

Disordered stretches follow at residues 1-183, 261-364, 409-439, 468-551, 586-734, and 749-768; these read MSAT…TPTT, SVEG…KSYE, SESERSMTLEASGRPHRTQSKGSSSTVSRFN, PDRS…NFTD, ISSE…PEPP, and RAQSAAHPASSNSNKTHTRK. The segment covering 68–77 has biased composition (basic and acidic residues); sequence DELRRDETRK. Over residues 80-90 the composition is skewed to polar residues; sequence STLTNDDSAVT. 4 stretches are compositionally biased toward basic residues: residues 101–111, 138–151, 306–315, and 346–358; these read PKRRGRPKKEQ, SKKRAQPATKRSKQ, ARKKPTKRAN, and AKPKVSRSKKKGQ. The span at 428–439 shows a compositional bias: polar residues; sequence SKGSSSTVSRFN. Residues 476–488 show a composition bias toward basic and acidic residues; the sequence is LDERPSNAKRVAE. Residues 491-524 show a composition bias toward polar residues; the sequence is CNTSDINPTQKGSDQAKAASTSETQPVVPSTTQS. Residues 613–628 are compositionally biased toward basic residues; that stretch reads PKGKGTTRKTTTKAKA. Over residues 629–670 the composition is skewed to low complexity; it reads KTQPSTSSKSTTEAISTTKSPSNPNSNTTTSTSTSISKPTPS. Acidic residues predominate over residues 675–685; the sequence is EEIEDSEEDSD. The segment covering 710–727 has biased composition (polar residues); it reads LPTSNLPSSPNRTTSTSV.

This sequence belongs to the SLX4 family. In terms of assembly, forms a heterodimer with slx1. Post-translationally, phosphorylated in response to DNA damage.

The protein resides in the nucleus. Its function is as follows. Regulatory subunit of the slx1-slx4 structure-specific endonuclease that resolves DNA secondary structures generated during DNA repair and recombination. Has endonuclease activity towards branched DNA substrates, introducing single-strand cuts in duplex DNA close to junctions with ss-DNA. The polypeptide is Structure-specific endonuclease subunit slx4 (slx4) (Aspergillus niger (strain ATCC MYA-4892 / CBS 513.88 / FGSC A1513)).